Consider the following 659-residue polypeptide: Threonine--tRNA ligase (659 aa).

The TGS domain occupies 7–70 (DSELIKLTLP…QQDGAIEIVT (64 aa)). The segment at 253–555 (DHRKLGSELE…LIENFAGNFP (303 aa)) is catalytic. Zn(2+)-binding residues include Cys-351, His-402, and His-532.

The protein belongs to the class-II aminoacyl-tRNA synthetase family. As to quaternary structure, homodimer. Requires Zn(2+) as cofactor.

It is found in the cytoplasm. It carries out the reaction tRNA(Thr) + L-threonine + ATP = L-threonyl-tRNA(Thr) + AMP + diphosphate + H(+). Functionally, catalyzes the attachment of threonine to tRNA(Thr) in a two-step reaction: L-threonine is first activated by ATP to form Thr-AMP and then transferred to the acceptor end of tRNA(Thr). Also edits incorrectly charged L-seryl-tRNA(Thr). The polypeptide is Threonine--tRNA ligase (Chloroherpeton thalassium (strain ATCC 35110 / GB-78)).